Consider the following 339-residue polypeptide: Transmembrane protein 120B (339 aa).

The stretch at 1 to 67 (MSGQLERCER…KHTLQRYKRH (67 aa)) forms a coiled coil. The next 6 membrane-spanning stretches (helical) occupy residues 102–124 (GLYL…AKFA), 132–152 (FKLY…FVLH), 159–179 (VFNF…SILI), 187–207 (GWWV…LTWP), 270–290 (FLLP…VTLF), and 302–322 (QVFV…LTTL).

The protein belongs to the TMEM120 family. In terms of assembly, heterooligomer with TMEM120A. Expressed in inguinal and subcutaneous white adipose tissue and in brown adipose tissue.

The protein localises to the nucleus inner membrane. Functionally, necessary for efficient adipogenesis. Does not show ion channel activity. The polypeptide is Transmembrane protein 120B (Mus musculus (Mouse)).